Consider the following 277-residue polypeptide: Small ribosomal subunit protein uS3 (277 aa).

The KH type-2 domain maps to 43-111 (IRELMSKGMD…QIQLNILEVK (69 aa)). The interval 217 to 277 (AAQQAAAPSS…AEANNAEGGK (61 aa)) is disordered. Basic and acidic residues predominate over residues 245–258 (NDRNDRGGRRERDS). The segment covering 259-277 (AAAPQQNSAAEANNAEGGK) has biased composition (low complexity).

Belongs to the universal ribosomal protein uS3 family. In terms of assembly, part of the 30S ribosomal subunit. Forms a tight complex with proteins S10 and S14.

Its function is as follows. Binds the lower part of the 30S subunit head. Binds mRNA in the 70S ribosome, positioning it for translation. The chain is Small ribosomal subunit protein uS3 from Kocuria rhizophila (strain ATCC 9341 / DSM 348 / NBRC 103217 / DC2201).